A 342-amino-acid polypeptide reads, in one-letter code: MKRKTLTQYLVEQQRSANALGPEVRLLIEVVARACKAISHAVSKGALGGVLGSLESENVQGEVQKKLDVLSNEILLEANEWGGHLAAMASEEMETIHLIPNRYPKGEYLLLFDPLDGSSNIDVNVSIGTIFSVLHAPHRVAGAEEVCEQDFLQPGSQQVAAGYAVYGPQTMLVLTIGTGVVGFTLDREMGSWVLTHENMRVPEDTKEFAINMSNMRHWAPPVRRYIDECLAGTTGPLGKDYNMRWIASMVADVHRIMTRGGIFMYPWDAREPGKAGKLRLMYEANPMSMIIEQAGGAAIDGTRRILDIQPDKLHQRVSVILGSKNEVERVGRYHAEAAQAPA.

Residues glutamate 91, aspartate 113, leucine 115, and aspartate 116 each contribute to the Mg(2+) site. Substrate is bound by residues 116 to 119 (DGSS), asparagine 211, and lysine 277. Residue glutamate 283 coordinates Mg(2+).

The protein belongs to the FBPase class 1 family. Homotetramer. Mg(2+) serves as cofactor.

Its subcellular location is the cytoplasm. It catalyses the reaction beta-D-fructose 1,6-bisphosphate + H2O = beta-D-fructose 6-phosphate + phosphate. It participates in carbohydrate biosynthesis; gluconeogenesis. In Bordetella petrii (strain ATCC BAA-461 / DSM 12804 / CCUG 43448), this protein is Fructose-1,6-bisphosphatase class 1.